A 556-amino-acid polypeptide reads, in one-letter code: 2-succinyl-5-enolpyruvyl-6-hydroxy-3-cyclohexene-1-carboxylate synthase (556 aa).

Belongs to the TPP enzyme family. MenD subfamily. In terms of assembly, homodimer. Mg(2+) is required as a cofactor. Requires Mn(2+) as cofactor. Thiamine diphosphate serves as cofactor.

The catalysed reaction is isochorismate + 2-oxoglutarate + H(+) = 5-enolpyruvoyl-6-hydroxy-2-succinyl-cyclohex-3-ene-1-carboxylate + CO2. Its pathway is quinol/quinone metabolism; 1,4-dihydroxy-2-naphthoate biosynthesis; 1,4-dihydroxy-2-naphthoate from chorismate: step 2/7. It functions in the pathway quinol/quinone metabolism; menaquinone biosynthesis. Functionally, catalyzes the thiamine diphosphate-dependent decarboxylation of 2-oxoglutarate and the subsequent addition of the resulting succinic semialdehyde-thiamine pyrophosphate anion to isochorismate to yield 2-succinyl-5-enolpyruvyl-6-hydroxy-3-cyclohexene-1-carboxylate (SEPHCHC). The chain is 2-succinyl-5-enolpyruvyl-6-hydroxy-3-cyclohexene-1-carboxylate synthase from Mycobacterium leprae (strain Br4923).